The sequence spans 439 residues: Ribosomal protein uS12 methylthiotransferase RimO (439 aa).

In terms of domain architecture, MTTase N-terminal spans 3-115 (NKLHIVSLGC…IDELLVEKKS (113 aa)). Residues cysteine 12, cysteine 46, cysteine 78, cysteine 146, cysteine 150, and cysteine 153 each coordinate [4Fe-4S] cluster. The Radical SAM core domain maps to 132–361 (TGSTYHAYIK…GKIAADVMQA (230 aa)).

It belongs to the methylthiotransferase family. RimO subfamily. Requires [4Fe-4S] cluster as cofactor.

The protein localises to the cytoplasm. The catalysed reaction is L-aspartate(89)-[ribosomal protein uS12]-hydrogen + (sulfur carrier)-SH + AH2 + 2 S-adenosyl-L-methionine = 3-methylsulfanyl-L-aspartate(89)-[ribosomal protein uS12]-hydrogen + (sulfur carrier)-H + 5'-deoxyadenosine + L-methionine + A + S-adenosyl-L-homocysteine + 2 H(+). Functionally, catalyzes the methylthiolation of an aspartic acid residue of ribosomal protein uS12. The chain is Ribosomal protein uS12 methylthiotransferase RimO from Sulfurimonas denitrificans (strain ATCC 33889 / DSM 1251) (Thiomicrospira denitrificans (strain ATCC 33889 / DSM 1251)).